We begin with the raw amino-acid sequence, 220 residues long: tRNA (guanine-N(7)-)-methyltransferase (220 aa).

Residues Glu44, Glu69, Asn96, and Asp118 each contribute to the S-adenosyl-L-methionine site. Asp118 is an active-site residue. Lys122 lines the substrate pocket. An interaction with RNA region spans residues 124–129 (RHEKRR). Residues Asp154 and 191–194 (TEYE) contribute to the substrate site.

The protein belongs to the class I-like SAM-binding methyltransferase superfamily. TrmB family.

It catalyses the reaction guanosine(46) in tRNA + S-adenosyl-L-methionine = N(7)-methylguanosine(46) in tRNA + S-adenosyl-L-homocysteine. Its pathway is tRNA modification; N(7)-methylguanine-tRNA biosynthesis. In terms of biological role, catalyzes the formation of N(7)-methylguanine at position 46 (m7G46) in tRNA. This Geobacillus sp. (strain WCH70) protein is tRNA (guanine-N(7)-)-methyltransferase.